The chain runs to 236 residues: 7-cyano-7-deazaguanine synthase 2 (236 aa).

Residue 11–21 coordinates ATP; the sequence is FSGGQDSATCL. Positions 199, 214, 217, and 220 each coordinate Zn(2+).

This sequence belongs to the QueC family. Requires Zn(2+) as cofactor.

It catalyses the reaction 7-carboxy-7-deazaguanine + NH4(+) + ATP = 7-cyano-7-deazaguanine + ADP + phosphate + H2O + H(+). It functions in the pathway purine metabolism; 7-cyano-7-deazaguanine biosynthesis. Catalyzes the ATP-dependent conversion of 7-carboxy-7-deazaguanine (CDG) to 7-cyano-7-deazaguanine (preQ(0)). The chain is 7-cyano-7-deazaguanine synthase 2 from Sphingopyxis alaskensis (strain DSM 13593 / LMG 18877 / RB2256) (Sphingomonas alaskensis).